Reading from the N-terminus, the 398-residue chain is MNEDITPKKPNAIIEWIDYRLPIFAFLKHFSHYQTPKNLNYLWNLGSIAGIALVIQIITGVILAMHYTPHVDHAFDSVERIMRNVNYGWLLRYTHAVGASMFFAAVYLHIARGLYYGSYKAPRELLWHIGIIIFLTMMATAFMGYVLPWGQMSYWGATVITNLFSAIPLIGEFIVTWLWGGFSVDNPTLNRFFSLHYLLPFIIVALVMLHLVALHQHGSNNPKGIDVKSPKDTIPFHPYYTVKDFVGFGVYFIIFAYFIFYEPNYLGHPDNYIPANPLVTPAHIVPEWYFLPFYAILRAMPSKLGGVLLMFGSIFVLFLLPWLDTSKVRSSNYRPIYRMAFWIFMADCLLLGYLGGQPAEEPYITISRFAACYYFFHVLVALPLIGKYEKPLPLPEEL.

A helical membrane pass occupies residues 45-65 (LGSIAGIALVIQIITGVILAM). Heme b contacts are provided by H95 and H109. The next 9 helical transmembrane spans lie at 96–116 (AVGA…GLYY), 129–149 (IGII…VLPW), 164–184 (FSAI…GFSV), 192–212 (FFSL…LHLV), 245–265 (FVGF…EPNY), 277–297 (PLVT…YAIL), 304–324 (LGGV…PWLD), 339–359 (MAFW…GQPA), and 366–386 (ISRF…PLIG). Residues H196 and H210 each contribute to the heme b site.

The protein belongs to the cytochrome b family. In terms of assembly, the main subunits of complex b-c1 are: cytochrome b, cytochrome c1 and the Rieske protein. Heme b is required as a cofactor.

It localises to the cell membrane. In terms of biological role, component of the ubiquinol-cytochrome c reductase complex (complex III or cytochrome b-c1 complex), which is a respiratory chain that generates an electrochemical potential coupled to ATP synthesis. The polypeptide is Cytochrome b (petB) (Rickettsia conorii (strain ATCC VR-613 / Malish 7)).